We begin with the raw amino-acid sequence, 318 residues long: Methionyl-tRNA formyltransferase (318 aa).

A (6S)-5,6,7,8-tetrahydrofolate-binding site is contributed by 113-116; it reads SLLP.

The protein belongs to the Fmt family.

It catalyses the reaction L-methionyl-tRNA(fMet) + (6R)-10-formyltetrahydrofolate = N-formyl-L-methionyl-tRNA(fMet) + (6S)-5,6,7,8-tetrahydrofolate + H(+). In terms of biological role, attaches a formyl group to the free amino group of methionyl-tRNA(fMet). The formyl group appears to play a dual role in the initiator identity of N-formylmethionyl-tRNA by promoting its recognition by IF2 and preventing the misappropriation of this tRNA by the elongation apparatus. This is Methionyl-tRNA formyltransferase from Hahella chejuensis (strain KCTC 2396).